We begin with the raw amino-acid sequence, 652 residues long: MKKQNNGLIKNPFLWLLFIFFLVTGFQYFYSGNNSGGSQQINYTELVQEITDGNVKELTYQPNGSVIEVSGVYKNPKTSKEGTGIQFFTPSVTKVEKFTSTILPADTTVSELQKLATDHKAEVTVKHESSSGIWINLLVSIVPFGILFFFLFSMMGNMGGGNGRNPMSFGRSKAKAANKEDIKVRFSDVAGAEEEKQELVEVVEFLKDPKRFTKLGARIPAGVLLEGPPGTGKTLLAKAVAGEAGVPFFSISGSDFVEMFVGVGASRVRSLFEDAKKAAPAIIFIDEIDAVGRQRGVGLGGGNDEREQTLNQLLIEMDGFEGNEGIIVIAATNRSDVLDPALLRPGRFDRKVLVGRPDVKGREAILKVHAKNKPLAEDVDLKLVAQQTPGFVGADLENVLNEAALVAARRNKSIIDASDIDEAEDRVIAGPSKKDKTVSQKERELVAYHEAGHTIVGLVLSNARVVHKVTIVPRGRAGGYMIALPKEDQMLLSKEDMKEQLAGLMGGRVAEEIIFNVQTTGASNDFEQATQMARAMVTEYGMSEKLGPVQYEGNHAMLGAQSPQKSISEQTAYEIDEEVRSLLNEARNKAAEIIQSNRETHKLIAEALLKYETLDSTQIKALYETGKMPEAVEEESHALSYDEVKSKMNDEK.

Residues 1 to 11 (MKKQNNGLIKN) lie on the Cytoplasmic side of the membrane. The helical transmembrane segment at 12–32 (PFLWLLFIFFLVTGFQYFYSG) threads the bilayer. Residues 33–131 (NNSGGSQQIN…EVTVKHESSS (99 aa)) lie on the Extracellular side of the membrane. A helical membrane pass occupies residues 132–152 (GIWINLLVSIVPFGILFFFLF). The Cytoplasmic segment spans residues 153–652 (SMMGNMGGGN…EVKSKMNDEK (500 aa)). 227–234 (GPPGTGKT) provides a ligand contact to ATP. Histidine 449 contributes to the Zn(2+) binding site. Residue glutamate 450 is part of the active site. Zn(2+)-binding residues include histidine 453 and aspartate 525. The interval 628-652 (MPEAVEEESHALSYDEVKSKMNDEK) is disordered. Residues 634–652 (EESHALSYDEVKSKMNDEK) show a composition bias toward basic and acidic residues.

This sequence in the central section; belongs to the AAA ATPase family. The protein in the C-terminal section; belongs to the peptidase M41 family. In terms of assembly, homohexamer. Zn(2+) serves as cofactor.

It is found in the cell membrane. Its function is as follows. Acts as a processive, ATP-dependent zinc metallopeptidase for both cytoplasmic and membrane proteins. Plays a role in the quality control of integral membrane proteins. In Streptococcus pneumoniae (strain ATCC BAA-255 / R6), this protein is ATP-dependent zinc metalloprotease FtsH.